The chain runs to 332 residues: Malate dehydrogenase, cytoplasmic (332 aa).

NAD(+) is bound by residues 16-17, Asp-43, and Gly-90; that span reads QI. Arg-99 is a binding site for oxaloacetate. 2 residues coordinate NAD(+): Gln-113 and Asn-132. Asn-132, Arg-163, His-188, and Ser-243 together coordinate oxaloacetate. The active-site Proton acceptor is the His-188.

It belongs to the LDH/MDH superfamily. MDH type 2 family. Homodimer.

The protein localises to the cytoplasm. The catalysed reaction is (S)-malate + NAD(+) = oxaloacetate + NADH + H(+). In Medicago sativa (Alfalfa), this protein is Malate dehydrogenase, cytoplasmic (CMDH).